Here is a 284-residue protein sequence, read N- to C-terminus: 4-diphosphocytidyl-2-C-methyl-D-erythritol kinase (284 aa).

Lysine 13 is an active-site residue. An ATP-binding site is contributed by 96 to 106; the sequence is PMGGGLGGGSS. The active site involves aspartate 138.

It belongs to the GHMP kinase family. IspE subfamily.

The catalysed reaction is 4-CDP-2-C-methyl-D-erythritol + ATP = 4-CDP-2-C-methyl-D-erythritol 2-phosphate + ADP + H(+). It participates in isoprenoid biosynthesis; isopentenyl diphosphate biosynthesis via DXP pathway; isopentenyl diphosphate from 1-deoxy-D-xylulose 5-phosphate: step 3/6. Catalyzes the phosphorylation of the position 2 hydroxy group of 4-diphosphocytidyl-2C-methyl-D-erythritol. The chain is 4-diphosphocytidyl-2-C-methyl-D-erythritol kinase from Chromobacterium violaceum (strain ATCC 12472 / DSM 30191 / JCM 1249 / CCUG 213 / NBRC 12614 / NCIMB 9131 / NCTC 9757 / MK).